The primary structure comprises 240 residues: UDP-2,3-diacylglucosamine hydrolase (240 aa).

5 residues coordinate Mn(2+): aspartate 8, histidine 10, aspartate 41, asparagine 79, and histidine 114. Asparagine 79–arginine 80 serves as a coordination point for substrate. Residues aspartate 122, serine 160, asparagine 164, lysine 167, and histidine 195 each coordinate substrate. The Mn(2+) site is built by histidine 195 and histidine 197.

Belongs to the LpxH family. Mn(2+) serves as cofactor.

The protein localises to the cell inner membrane. The catalysed reaction is UDP-2-N,3-O-bis[(3R)-3-hydroxytetradecanoyl]-alpha-D-glucosamine + H2O = 2-N,3-O-bis[(3R)-3-hydroxytetradecanoyl]-alpha-D-glucosaminyl 1-phosphate + UMP + 2 H(+). The protein operates within glycolipid biosynthesis; lipid IV(A) biosynthesis; lipid IV(A) from (3R)-3-hydroxytetradecanoyl-[acyl-carrier-protein] and UDP-N-acetyl-alpha-D-glucosamine: step 4/6. Its function is as follows. Hydrolyzes the pyrophosphate bond of UDP-2,3-diacylglucosamine to yield 2,3-diacylglucosamine 1-phosphate (lipid X) and UMP by catalyzing the attack of water at the alpha-P atom. Involved in the biosynthesis of lipid A, a phosphorylated glycolipid that anchors the lipopolysaccharide to the outer membrane of the cell. This is UDP-2,3-diacylglucosamine hydrolase from Escherichia coli (strain SE11).